We begin with the raw amino-acid sequence, 177 residues long: ATP synthase subunit delta (177 aa).

This sequence belongs to the ATPase delta chain family. As to quaternary structure, F-type ATPases have 2 components, F(1) - the catalytic core - and F(0) - the membrane proton channel. F(1) has five subunits: alpha(3), beta(3), gamma(1), delta(1), epsilon(1). F(0) has three main subunits: a(1), b(2) and c(10-14). The alpha and beta chains form an alternating ring which encloses part of the gamma chain. F(1) is attached to F(0) by a central stalk formed by the gamma and epsilon chains, while a peripheral stalk is formed by the delta and b chains.

It is found in the cell inner membrane. Its function is as follows. F(1)F(0) ATP synthase produces ATP from ADP in the presence of a proton or sodium gradient. F-type ATPases consist of two structural domains, F(1) containing the extramembraneous catalytic core and F(0) containing the membrane proton channel, linked together by a central stalk and a peripheral stalk. During catalysis, ATP synthesis in the catalytic domain of F(1) is coupled via a rotary mechanism of the central stalk subunits to proton translocation. Functionally, this protein is part of the stalk that links CF(0) to CF(1). It either transmits conformational changes from CF(0) to CF(1) or is implicated in proton conduction. The sequence is that of ATP synthase subunit delta from Enterobacter sp. (strain 638).